Reading from the N-terminus, the 655-residue chain is Methyl-accepting chemotaxis protein McpC (655 aa).

The Cytoplasmic segment spans residues 1–8; sequence MFKKLHMK. Residues 9–29 traverse the membrane as a helical segment; that stretch reads IAVFVSIMLIITVVLLMLSSY. The Extracellular portion of the chain corresponds to 30–276; it reads LTLKPMITED…LMWISDKMNR (247 aa). The Cache domain occupies 148-225; that stretch reads WTEPYKDVVT…SNQGKNISKD (78 aa). A helical membrane pass occupies residues 277–297; it reads ANLWISLIALIITIILSYFLA. One can recognise an HAMP domain in the interval 298-350; sequence KTITGPIQQLIVKTKAVSAGDLTVRAESKSKDEVGILTRDFNLMVENMKEMVE. Over 298 to 655 the chain is Cytoplasmic; it reads KTITGPIQQL…LMNTIAKFTL (358 aa). The Methyl-accepting transducer domain occupies 369–619; the sequence is VAAETNETSG…ESAAAAEEVN (251 aa).

It belongs to the methyl-accepting chemotaxis (MCP) protein family. As to quaternary structure, interacts with FloT. In terms of processing, some glutamine residues are deamidated to glutamate by CheD and subsequently methylated.

The protein localises to the cell membrane. It localises to the membrane raft. Its function is as follows. Chemotactic-signal transducers respond to changes in the concentration of attractants and repellents in the environment, transduce a signal from the outside to the inside of the cell, and facilitate sensory adaptation through the variation of the level of methylation. All amino acids serve as attractants in B.subtilis, they appear to cause an increase in the turnover methyl groups, leading to methylation of an unidentified acceptor, while repellents have been shown to cause a decrease in methyl group turnover. The methyl groups are added by a methyltransferase and removed by a methylesterase. McpC is required for taxis to cysteine, proline, threonine, glycine, serine, lysine, valine and arginine and for aspartate, glutamine, histidine and glutamate. Primarily mediates response to positive stimulus of PTS carbohydrates. Greatly influences the duration or magnitude of the response to negative PTS carbohydrate stimulus. This Bacillus subtilis (strain 168) protein is Methyl-accepting chemotaxis protein McpC (mcpC).